Reading from the N-terminus, the 482-residue chain is UDP-N-acetylmuramate--L-alanine ligase (482 aa).

Position 119-125 (119-125 (GTHGKTT)) interacts with ATP.

The protein belongs to the MurCDEF family.

It localises to the cytoplasm. The catalysed reaction is UDP-N-acetyl-alpha-D-muramate + L-alanine + ATP = UDP-N-acetyl-alpha-D-muramoyl-L-alanine + ADP + phosphate + H(+). The protein operates within cell wall biogenesis; peptidoglycan biosynthesis. In terms of biological role, cell wall formation. This chain is UDP-N-acetylmuramate--L-alanine ligase, found in Cyanothece sp. (strain PCC 7425 / ATCC 29141).